The sequence spans 278 residues: Adenosylcobinamide-GDP ribazoletransferase (278 aa).

7 consecutive transmembrane segments (helical) span residues 31–51 (AMAL…SAVF), 66–86 (TLLP…GLHL), 115–135 (TIGA…VGAL), 148–168 (ILVA…GAVP), 187–207 (DAAL…LLDF), 215–237 (ALRA…RYLL), and 247–267 (ILGG…AMTI).

The protein belongs to the CobS family. It depends on Mg(2+) as a cofactor.

Its subcellular location is the cell membrane. The enzyme catalyses alpha-ribazole + adenosylcob(III)inamide-GDP = adenosylcob(III)alamin + GMP + H(+). It carries out the reaction alpha-ribazole 5'-phosphate + adenosylcob(III)inamide-GDP = adenosylcob(III)alamin 5'-phosphate + GMP + H(+). The protein operates within cofactor biosynthesis; adenosylcobalamin biosynthesis; adenosylcobalamin from cob(II)yrinate a,c-diamide: step 7/7. Functionally, joins adenosylcobinamide-GDP and alpha-ribazole to generate adenosylcobalamin (Ado-cobalamin). Also synthesizes adenosylcobalamin 5'-phosphate from adenosylcobinamide-GDP and alpha-ribazole 5'-phosphate. The chain is Adenosylcobinamide-GDP ribazoletransferase from Frankia casuarinae (strain DSM 45818 / CECT 9043 / HFP020203 / CcI3).